The following is a 612-amino-acid chain: Zinc metalloproteinase-disintegrin-like 2a (612 aa).

The first 20 residues, 1-20, serve as a signal peptide directing secretion; the sequence is MIQVLLVTICLAVFPYQGSS. Residues 21-189 constitute a propeptide that is removed on maturation; it reads IILGSGNVND…KKASQLNLTP (169 aa). Residues 199–395 enclose the Peptidase M12B domain; that stretch reads KYIELVIVAD…NRPPCILNKP (197 aa). Residue Glu-202 coordinates Ca(2+). A glycan (N-linked (GlcNAc...) asparagine) is linked at Asn-218. Asp-286 contacts Ca(2+). 3 cysteine pairs are disulfide-bonded: Cys-310–Cys-390, Cys-350–Cys-374, and Cys-352–Cys-357. His-335 contributes to the Zn(2+) binding site. Glu-336 is an active-site residue. Positions 339 and 345 each coordinate Zn(2+). Cys-390, Asn-393, Val-405, Asn-408, Phe-410, Glu-412, Glu-415, and Asp-418 together coordinate Ca(2+). The region spanning 403–489 is the Disintegrin domain; the sequence is PPVCGNYFVE…DCPTDNFQRN (87 aa). Cystine bridges form between Cys-406-Cys-435, Cys-417-Cys-430, Cys-419-Cys-425, Cys-429-Cys-452, Cys-443-Cys-449, Cys-448-Cys-474, Cys-461-Cys-481, Cys-468-Cys-500, Cys-493-Cys-505, Cys-512-Cys-562, Cys-527-Cys-573, Cys-540-Cys-550, Cys-557-Cys-599, and Cys-593-Cys-605. The D/ECD-tripeptide motif lies at 467 to 469; sequence ECD.

Belongs to the venom metalloproteinase (M12B) family. P-III subfamily. It depends on Zn(2+) as a cofactor. Expressed by the venom gland.

The protein localises to the secreted. Snake venom metalloproteinase that impairs hemostasis in the envenomed animal. This chain is Zinc metalloproteinase-disintegrin-like 2a, found in Crotalus adamanteus (Eastern diamondback rattlesnake).